We begin with the raw amino-acid sequence, 326 residues long: Ribonuclease H2 subunit A (326 aa).

The disordered stretch occupies residues 1–47; that stretch reads MKDDHDAWEPEELVSDNNSSENELQEDQNSSITFLPPSVNKSNPAKS. Polar residues predominate over residues 15-47; that stretch reads SDNNSSENELQEDQNSSITFLPPSVNKSNPAKS. One can recognise an RNase H type-2 domain in the interval 63 to 286; the sequence is PYRLGVDEAG…AKDLLELPSK (224 aa). Residues Asp-69, Glu-70, and Asp-180 each coordinate a divalent metal cation.

It belongs to the RNase HII family. Eukaryotic subfamily. Mn(2+) is required as a cofactor. It depends on Mg(2+) as a cofactor.

The enzyme catalyses Endonucleolytic cleavage to 5'-phosphomonoester.. Endonuclease that specifically degrades the RNA of RNA-DNA hybrids. Participates in DNA replication. This chain is Ribonuclease H2 subunit A (rnh201), found in Schizosaccharomyces pombe (strain 972 / ATCC 24843) (Fission yeast).